The chain runs to 787 residues: (-)-kolavenyl diphosphate synthase, chloroplastic (787 aa).

Residues 1-47 (MSFATSLPRPTTTGAAGFGLPLATCISLSVSHSFSPKFGICNNTSLR) constitute a chloroplast transit peptide. K237 is a binding site for substrate. Residues D368 and D370 each contribute to the Mg(2+) site. The DXDD motif motif lies at 368-371 (DSDD). Substrate is bound at residue K454.

The protein belongs to the terpene synthase family. Tpsc subfamily. The cofactor is Mg(2+). In terms of tissue distribution, expressed in peltate glandular trichomes of leaves. Highly expressed in the first leaf pair.

It is found in the plastid. The protein localises to the chloroplast. It catalyses the reaction (2E,6E,10E)-geranylgeranyl diphosphate = (-)-kolavenyl diphosphate. With respect to regulation, inhibited by high concentrations of magnesium. Its function is as follows. Involved in the biosynthesis of clerodane diterpenoids natural products, including salvinorin A with potent agonistic activity on brain kappa-opioid receptors, thus conferring hallucinogenic properties. Diterpene synthase that catalyzes the formation of (-)-kolavenyl diphosphate from geranylgeranyl diphosphate (GGPP) as the first reaction in salvinorin A biosynthesis. This Salvia divinorum (Maria pastora) protein is (-)-kolavenyl diphosphate synthase, chloroplastic.